The following is a 279-amino-acid chain: DegV domain-containing protein lmo1863 (279 aa).

The DegV domain maps to Ile-4–Thr-278. Residues Ser-62 and Ser-94 each coordinate hexadecanoate.

Functionally, may bind long-chain fatty acids, such as palmitate, and may play a role in lipid transport or fatty acid metabolism. This chain is DegV domain-containing protein lmo1863, found in Listeria monocytogenes serovar 1/2a (strain ATCC BAA-679 / EGD-e).